Here is a 383-residue protein sequence, read N- to C-terminus: Acetylornithine deacetylase (383 aa).

Residue H80 participates in Zn(2+) binding. The active site involves D82. D112 is a binding site for Zn(2+). Residue E144 is part of the active site. Zn(2+) is bound by residues E145, E169, and H355.

It belongs to the peptidase M20A family. ArgE subfamily. Homodimer. Zn(2+) is required as a cofactor. The cofactor is Co(2+). It depends on glutathione as a cofactor.

It is found in the cytoplasm. It carries out the reaction N(2)-acetyl-L-ornithine + H2O = L-ornithine + acetate. It functions in the pathway amino-acid biosynthesis; L-arginine biosynthesis; L-ornithine from N(2)-acetyl-L-ornithine (linear): step 1/1. Its function is as follows. Catalyzes the hydrolysis of the amide bond of N(2)-acetylated L-amino acids. Cleaves the acetyl group from N-acetyl-L-ornithine to form L-ornithine, an intermediate in L-arginine biosynthesis pathway, and a branchpoint in the synthesis of polyamines. This is Acetylornithine deacetylase from Escherichia coli O7:K1 (strain IAI39 / ExPEC).